The primary structure comprises 130 residues: Small ribosomal subunit protein uS8 (130 aa).

Belongs to the universal ribosomal protein uS8 family. As to quaternary structure, part of the 30S ribosomal subunit. Contacts proteins S5 and S12.

Functionally, one of the primary rRNA binding proteins, it binds directly to 16S rRNA central domain where it helps coordinate assembly of the platform of the 30S subunit. This chain is Small ribosomal subunit protein uS8, found in Aster yellows witches'-broom phytoplasma (strain AYWB).